Here is a 396-residue protein sequence, read N- to C-terminus: 1-deoxy-D-xylulose 5-phosphate reductoisomerase (396 aa).

NADPH contacts are provided by Thr10, Gly11, Ser12, Ile13, and Asn123. Lys124 provides a ligand contact to 1-deoxy-D-xylulose 5-phosphate. Residue Glu125 coordinates NADPH. Position 149 (Asp149) interacts with Mn(2+). 1-deoxy-D-xylulose 5-phosphate contacts are provided by Ser150, Glu151, Ser185, and His208. Glu151 is a Mn(2+) binding site. An NADPH-binding site is contributed by Gly214. 1-deoxy-D-xylulose 5-phosphate is bound by residues Ser221, Asn226, Lys227, and Glu230. Glu230 lines the Mn(2+) pocket.

This sequence belongs to the DXR family. Mg(2+) is required as a cofactor. Mn(2+) serves as cofactor.

The enzyme catalyses 2-C-methyl-D-erythritol 4-phosphate + NADP(+) = 1-deoxy-D-xylulose 5-phosphate + NADPH + H(+). The protein operates within isoprenoid biosynthesis; isopentenyl diphosphate biosynthesis via DXP pathway; isopentenyl diphosphate from 1-deoxy-D-xylulose 5-phosphate: step 1/6. Catalyzes the NADPH-dependent rearrangement and reduction of 1-deoxy-D-xylulose-5-phosphate (DXP) to 2-C-methyl-D-erythritol 4-phosphate (MEP). The sequence is that of 1-deoxy-D-xylulose 5-phosphate reductoisomerase from Shewanella baltica (strain OS223).